Consider the following 258-residue polypeptide: Acetylglutamate kinase (258 aa).

Residues 41–42 (GG), R63, and N156 each bind substrate.

This sequence belongs to the acetylglutamate kinase family. ArgB subfamily.

The protein localises to the cytoplasm. It catalyses the reaction N-acetyl-L-glutamate + ATP = N-acetyl-L-glutamyl 5-phosphate + ADP. The protein operates within amino-acid biosynthesis; L-arginine biosynthesis; N(2)-acetyl-L-ornithine from L-glutamate: step 2/4. Functionally, catalyzes the ATP-dependent phosphorylation of N-acetyl-L-glutamate. The chain is Acetylglutamate kinase from Geobacillus thermodenitrificans (strain NG80-2).